Consider the following 261-residue polypeptide: Enolase-phosphatase E1 (261 aa).

The Mg(2+) site is built by aspartate 16 and glutamate 18. Substrate-binding positions include serine 153–serine 154 and lysine 187. A Mg(2+)-binding site is contributed by aspartate 212.

It belongs to the HAD-like hydrolase superfamily. MasA/MtnC family. In terms of assembly, monomer. It depends on Mg(2+) as a cofactor.

It localises to the cytoplasm. It is found in the nucleus. The enzyme catalyses 5-methylsulfanyl-2,3-dioxopentyl phosphate + H2O = 1,2-dihydroxy-5-(methylsulfanyl)pent-1-en-3-one + phosphate. The protein operates within amino-acid biosynthesis; L-methionine biosynthesis via salvage pathway; L-methionine from S-methyl-5-thio-alpha-D-ribose 1-phosphate: step 3/6. Its pathway is amino-acid biosynthesis; L-methionine biosynthesis via salvage pathway; L-methionine from S-methyl-5-thio-alpha-D-ribose 1-phosphate: step 4/6. Bifunctional enzyme that catalyzes the enolization of 2,3-diketo-5-methylthiopentyl-1-phosphate (DK-MTP-1-P) into the intermediate 2-hydroxy-3-keto-5-methylthiopentenyl-1-phosphate (HK-MTPenyl-1-P), which is then dephosphorylated to form the acireductone 1,2-dihydroxy-3-keto-5-methylthiopentene (DHK-MTPene). The polypeptide is Enolase-phosphatase E1 (Bos taurus (Bovine)).